The following is a 518-amino-acid chain: Glutamate--cysteine ligase (518 aa).

The protein belongs to the glutamate--cysteine ligase type 1 family. Type 1 subfamily.

It carries out the reaction L-cysteine + L-glutamate + ATP = gamma-L-glutamyl-L-cysteine + ADP + phosphate + H(+). It participates in sulfur metabolism; glutathione biosynthesis; glutathione from L-cysteine and L-glutamate: step 1/2. This Escherichia coli O7:K1 (strain IAI39 / ExPEC) protein is Glutamate--cysteine ligase.